A 240-amino-acid chain; its full sequence is Protein RoBo-1 (240 aa).

An N-terminal signal peptide occupies residues 1–26 (MSWFLVLKCLLTVCIISHLSVSSTES). N-linked (GlcNAc...) asparagine glycosylation is present at asparagine 42. Disulfide bonds link cysteine 47/cysteine 76, cysteine 81/cysteine 102, cysteine 103/cysteine 108, cysteine 127/cysteine 151, and cysteine 144/cysteine 171. N-linked (GlcNAc...) asparagine glycosylation occurs at asparagine 153.

Belongs to the CNF-like-inhibitor family. N-glycosylated. As to expression, expressed abundantly in bone, including the lengthening growth plate where cartilage is remodeled into bone.

Its subcellular location is the secreted. In terms of biological role, may play a novel role in the growth or remodeling of bone. The chain is Protein RoBo-1 from Rattus norvegicus (Rat).